We begin with the raw amino-acid sequence, 352 residues long: Pejvakin (352 aa).

It belongs to the gasdermin family. In terms of assembly, interacts with MAP1LC3B; interaction is direct. Interacts with IQGAP1. Interacts with ROCK2. Interacts with TRIOBP.

It localises to the peroxisome membrane. It is found in the cell projection. The protein resides in the cilium. Functionally, peroxisome-associated protein required to protect auditory hair cells against noise-induced damage. Acts by regulating noise-induced peroxisome proliferation in auditory hair cells and neurons, and promoting autophagic degradation of damaged peroxisomes (pexophagy). Noise overexposure increases reactive oxygen species (ROS) levels, causing oxidative damage to auditory hair cells and resulting in hearing loss. PJVK acts as a ROS sensor that recruits the autophagy machinery to trigger pexophagy of peroxisomes damaged by oxidative stress. In addition to pexophagy, also required to promote peroxisome proliferation in response to sound overstimulation. The protein is Pejvakin of Homo sapiens (Human).